Reading from the N-terminus, the 1033-residue chain is DNA polymerase I A, chloroplastic (1033 aa).

Pro residues predominate over residues 1–11 (MAVAPPLPPAP). 2 disordered regions span residues 1–32 (MAVAPPLPPAPARQLRRWKGSSPRPPPWLSSP) and 104–142 (TNGTTPLRVGNLRHDPSEDIRSSNYPSLYNQRERGPSNS). Residues 1–55 (MAVAPPLPPAPARQLRRWKGSSPRPPPWLSSPFRRTRYLSRPAFAAGGRQDYSPS) constitute a chloroplast transit peptide. Positions 115 to 124 (LRHDPSEDIR) are enriched in basic and acidic residues. The segment covering 125–142 (SSNYPSLYNQRERGPSNS) has biased composition (polar residues). The 162-residue stretch at 321–482 (FGNGKTCIWV…LYESLKNKLE (162 aa)) folds into the 3'-5' exonuclease domain. The polymerase stretch occupies residues 696–1030 (CHAIAALCEV…VDAKYAKSWY (335 aa)).

This sequence belongs to the DNA polymerase type-A family. Expressed in shoot apical meristem, root apical meristem, leaf primordia and the marginal meristem.

The protein localises to the plastid. Its subcellular location is the chloroplast. The catalysed reaction is DNA(n) + a 2'-deoxyribonucleoside 5'-triphosphate = DNA(n+1) + diphosphate. Its activity is regulated as follows. Inhibited by dideoxythymidine-triphosphate (ddTTP), but not by aphidicolin and N-ethylmaleimide. Its function is as follows. In addition to polymerase activity, this DNA polymerase exhibits 5'-3' exonuclease activity. May be required for DNA replication and accumulation in plastids. In Oryza sativa subsp. japonica (Rice), this protein is DNA polymerase I A, chloroplastic.